Reading from the N-terminus, the 78-residue chain is DNA-directed RNA polymerase subunit omega (78 aa).

It belongs to the RNA polymerase subunit omega family. As to quaternary structure, in cyanobacteria the RNAP catalytic core is composed of 2 alpha, 1 beta, 1 beta', 1 gamma and 1 omega subunit. When a sigma factor is associated with the core the holoenzyme is formed, which can initiate transcription.

The catalysed reaction is RNA(n) + a ribonucleoside 5'-triphosphate = RNA(n+1) + diphosphate. In terms of biological role, promotes RNA polymerase assembly. Latches the N- and C-terminal regions of the beta' subunit thereby facilitating its interaction with the beta and alpha subunits. This is DNA-directed RNA polymerase subunit omega from Prochlorococcus marinus (strain MIT 9301).